We begin with the raw amino-acid sequence, 108 residues long: uncharacterized protein (108 aa).

The span at 1 to 12 (MSNQQKQLQLPS) shows a compositional bias: polar residues. A disordered region spans residues 1 to 22 (MSNQQKQLQLPSASIKKPKEKQ).

This is an uncharacterized protein from Dictyostelium discoideum (Social amoeba).